Consider the following 199-residue polypeptide: MAFALLRPVGAHVLYPDVRLLSEDEENRSESDASDQSFGCCEGPEAARRGPGPGGGRRAGGGGGAGPVVVVRQRQAANARERDRTQSVNTAFTALRTLIPTEPVDRKLSKIETVRLASSYIAHLANVLLLGDSADDGQPCFRAAGSAKGAVPAAADGGRQPRSICTFCLSNQRKGGGRRDLGGSCLKVRGVAPLRGPRR.

The disordered stretch occupies residues 25–67; sequence EENRSESDASDQSFGCCEGPEAARRGPGPGGGRRAGGGGGAGP. Over residues 51–66 the composition is skewed to gly residues; sequence PGPGGGRRAGGGGGAG. The bHLH domain occupies 72–124; the sequence is RQRQAANARERDRTQSVNTAFTALRTLIPTEPVDRKLSKIETVRLASSYIAHL.

In terms of assembly, heterodimer; efficient DNA binding requires dimerization with another bHLH protein, such as TCF3/E12. Interacts with MEOX2.

Its subcellular location is the nucleus. In terms of biological role, early transcription factor that plays a key role in somitogenesis, paraxial mesoderm development and regulation of stem cell pluripotency. Essential for the mesenchymal to epithelial transition associated with somite formation. Required for somite morphogenesis, thereby regulating patterning of the axial skeleton and skeletal muscles. Required for proper localization of somite epithelium markers during the mesenchymal to epithelial transition. Also plays a key role in regulation of stem cell pluripotency. Promotes pluripotency exit of embryonic stem cells (ESCs) by priming ESCs for differentiation. Acts as a key regulator of self-renewal of hematopoietic stem cells (HSCs) by mediating HSCs quiescence and long-term self-renewal. Together with MEOX2, regulates transcription in heart endothelial cells to regulate fatty acid transport across heart endothelial cells. Acts by forming a heterodimer with another helix-loop-helix (bHLH) protein, such as TCF3/E12, that binds DNA on E-box motifs (5'-CANNTG-3') and activates transcription of target genes. The polypeptide is Transcription factor 15 (Homo sapiens (Human)).